The chain runs to 890 residues: Translation initiation factor IF-2 (890 aa).

Residues 45–304 (LIDHLNQKNS…LQQGFQKPAQ (260 aa)) are disordered. Residues 67–81 (STLNIPGTGGKSKSV) show a composition bias toward polar residues. Residues 92–217 (VKRDPQEAER…RMAEENKWTD (126 aa)) show a composition bias toward basic and acidic residues. Basic residues predominate over residues 252 to 266 (GRGRNAKAARPKKGN). Over residues 267-280 (KHAESKADREEARA) the composition is skewed to basic and acidic residues. The 170-residue stretch at 389 to 558 (PRAPVVTIMG…LLQAEVLELK (170 aa)) folds into the tr-type G domain. A G1 region spans residues 398–405 (GHVDHGKT). 398 to 405 (GHVDHGKT) serves as a coordination point for GTP. The interval 423–427 (GITQH) is G2. Positions 444 to 447 (DTPG) are G3. GTP contacts are provided by residues 444 to 448 (DTPGH) and 498 to 501 (NKID). Residues 498 to 501 (NKID) are G4. The G5 stretch occupies residues 534-536 (SAK). Lys-808 carries the post-translational modification N6-acetyllysine.

It belongs to the TRAFAC class translation factor GTPase superfamily. Classic translation factor GTPase family. IF-2 subfamily.

Its subcellular location is the cytoplasm. Its function is as follows. One of the essential components for the initiation of protein synthesis. Protects formylmethionyl-tRNA from spontaneous hydrolysis and promotes its binding to the 30S ribosomal subunits. Also involved in the hydrolysis of GTP during the formation of the 70S ribosomal complex. The sequence is that of Translation initiation factor IF-2 from Shigella sonnei (strain Ss046).